The following is a 465-amino-acid chain: Box C/D snoRNA protein 1 (465 aa).

A disordered region spans residues methionine 1–proline 72. Serine 25 is subject to Phosphoserine. Basic and acidic residues predominate over residues glutamate 56–glutamate 70. Residues lysine 79, lysine 108, lysine 118, lysine 138, lysine 148, lysine 157, lysine 168, lysine 178, and lysine 195 each participate in a glycyl lysine isopeptide (Lys-Gly) (interchain with G-Cter in SUMO2) cross-link. Zn(2+) contacts are provided by cysteine 215, cysteine 218, cysteine 227, cysteine 230, cysteine 235, cysteine 239, histidine 243, and cysteine 249. The HIT-type zinc finger occupies cysteine 215–cysteine 249. Residue lysine 454 forms a Glycyl lysine isopeptide (Lys-Gly) (interchain with G-Cter in SUMO2) linkage.

The protein belongs to the BCD1 family. As to quaternary structure, interacts with FBL, SNU13, NOP58, NUFIP1, RUVBL1, RUVBL2 and TAF9. Interacts (via HIT-type zinc finger) with the RUVBL1/RUVBL2 complex in the presence of ADP.

Functionally, required for box C/D snoRNAs accumulation involved in snoRNA processing, snoRNA transport to the nucleolus and ribosome biogenesis. This chain is Box C/D snoRNA protein 1 (ZNHIT6), found in Pongo abelii (Sumatran orangutan).